The following is a 432-amino-acid chain: Enolase (432 aa).

Glutamine 166 provides a ligand contact to (2R)-2-phosphoglycerate. The Proton donor role is filled by glutamate 208. Residues aspartate 245, glutamate 291, and aspartate 318 each contribute to the Mg(2+) site. Lysine 343, arginine 372, serine 373, and lysine 394 together coordinate (2R)-2-phosphoglycerate. Catalysis depends on lysine 343, which acts as the Proton acceptor.

Belongs to the enolase family. It depends on Mg(2+) as a cofactor.

It is found in the cytoplasm. Its subcellular location is the secreted. It localises to the cell surface. The catalysed reaction is (2R)-2-phosphoglycerate = phosphoenolpyruvate + H2O. Its pathway is carbohydrate degradation; glycolysis; pyruvate from D-glyceraldehyde 3-phosphate: step 4/5. Its function is as follows. Catalyzes the reversible conversion of 2-phosphoglycerate (2-PG) into phosphoenolpyruvate (PEP). It is essential for the degradation of carbohydrates via glycolysis. This is Enolase from Leptospira interrogans serogroup Icterohaemorrhagiae serovar copenhageni (strain Fiocruz L1-130).